The following is a 341-amino-acid chain: GTPase Obg (341 aa).

Residues 1 to 159 form the Obg domain; sequence MKFVDEALIK…RNLRLELRVL (159 aa). Residues 128 to 150 are disordered; sequence TRYKSSVNRSPRQTTPGSPGESR. Polar residues predominate over residues 129-144; that stretch reads RYKSSVNRSPRQTTPG. An OBG-type G domain is found at 160-334; that stretch reads ADVGLLGLPN…LCYALMQLID (175 aa). Residues 166–173, 191–195, 213–216, 283–286, and 315–317 each bind GTP; these read GLPNAGKS, FTTLH, DIPG, NKID, and SAI. Mg(2+) is bound by residues S173 and T193.

This sequence belongs to the TRAFAC class OBG-HflX-like GTPase superfamily. OBG GTPase family. Monomer. Requires Mg(2+) as cofactor.

It is found in the cytoplasm. Its function is as follows. An essential GTPase which binds GTP, GDP and possibly (p)ppGpp with moderate affinity, with high nucleotide exchange rates and a fairly low GTP hydrolysis rate. Plays a role in control of the cell cycle, stress response, ribosome biogenesis and in those bacteria that undergo differentiation, in morphogenesis control. This chain is GTPase Obg, found in Legionella pneumophila (strain Lens).